The chain runs to 540 residues: O-phosphoserine--tRNA(Cys) ligase (540 aa).

Residues 188-190 (HMT), 233-235 (SAS), 275-276 (YY), and Asn-319 each bind substrate.

Belongs to the class-II aminoacyl-tRNA synthetase family. O-phosphoseryl-tRNA(Cys) synthetase subfamily. In terms of assembly, homotetramer. Interacts with SepCysS.

The enzyme catalyses tRNA(Cys) + O-phospho-L-serine + ATP = O-phospho-L-seryl-tRNA(Cys) + AMP + diphosphate. In terms of biological role, catalyzes the attachment of O-phosphoserine (Sep) to tRNA(Cys). In Methanococcus aeolicus (strain ATCC BAA-1280 / DSM 17508 / OCM 812 / Nankai-3), this protein is O-phosphoserine--tRNA(Cys) ligase.